The chain runs to 55 residues: ATP synthase F(0) complex subunit 8 (55 aa).

The helical transmembrane segment at 10 to 30 (FPIMMLSWLIFSLIIQPKLLL) threads the bilayer. The segment at 35–55 (NPPSNKTTTTTRSNPWTWPWT) is disordered. Over residues 37-55 (PSNKTTTTTRSNPWTWPWT) the composition is skewed to low complexity.

This sequence belongs to the ATPase protein 8 family. Component of the ATP synthase complex composed at least of ATP5F1A/subunit alpha, ATP5F1B/subunit beta, ATP5MC1/subunit c (homooctomer), MT-ATP6/subunit a, MT-ATP8/subunit 8, ATP5ME/subunit e, ATP5MF/subunit f, ATP5MG/subunit g, ATP5MK/subunit k, ATP5MJ/subunit j, ATP5F1C/subunit gamma, ATP5F1D/subunit delta, ATP5F1E/subunit epsilon, ATP5PF/subunit F6, ATP5PB/subunit b, ATP5PD/subunit d, ATP5PO/subunit OSCP. ATP synthase complex consists of a soluble F(1) head domain (subunits alpha(3) and beta(3)) - the catalytic core - and a membrane F(0) domain - the membrane proton channel (subunits c, a, 8, e, f, g, k and j). These two domains are linked by a central stalk (subunits gamma, delta, and epsilon) rotating inside the F1 region and a stationary peripheral stalk (subunits F6, b, d, and OSCP).

The protein resides in the mitochondrion membrane. Its function is as follows. Subunit 8, of the mitochondrial membrane ATP synthase complex (F(1)F(0) ATP synthase or Complex V) that produces ATP from ADP in the presence of a proton gradient across the membrane which is generated by electron transport complexes of the respiratory chain. ATP synthase complex consist of a soluble F(1) head domain - the catalytic core - and a membrane F(1) domain - the membrane proton channel. These two domains are linked by a central stalk rotating inside the F(1) region and a stationary peripheral stalk. During catalysis, ATP synthesis in the catalytic domain of F(1) is coupled via a rotary mechanism of the central stalk subunits to proton translocation. In vivo, can only synthesize ATP although its ATP hydrolase activity can be activated artificially in vitro. Part of the complex F(0) domain. This chain is ATP synthase F(0) complex subunit 8, found in Opisthocomus hoazin (Hoatzin).